The sequence spans 274 residues: Prolyl 4-hydroxylase 13 (274 aa).

The Cytoplasmic segment spans residues 1-10 (MRSYGKEKKL). A helical; Signal-anchor for type II membrane protein transmembrane segment spans residues 11–31 (VFPYVFIACCFFLAIFGFCFF). At 32–274 (NLFSQGISFS…TKWIRDQTYD (243 aa)) the chain is on the lumenal side. Residues 151–270 (YYESFNILRY…KWVATKWIRD (120 aa)) enclose the Fe2OG dioxygenase domain. Fe cation contacts are provided by H169 and D171. N242 carries N-linked (GlcNAc...) asparagine glycosylation. A Fe cation-binding site is contributed by H251. Residue K261 coordinates 2-oxoglutarate.

This sequence belongs to the P4HA family. The cofactor is Fe(2+). L-ascorbate serves as cofactor. Expressed in epidermal root hair cells (trichoblasts) root hairless cells (atrichoblasts).

It is found in the endoplasmic reticulum membrane. The catalysed reaction is L-prolyl-[collagen] + 2-oxoglutarate + O2 = trans-4-hydroxy-L-prolyl-[collagen] + succinate + CO2. Its function is as follows. Catalyzes the post-translational formation of 4-hydroxyproline in -Xaa-Pro-Gly- sequences in proline-rich peptide sequences of plant glycoproteins and other proteins. Hydroxyprolines are important constituent of many plant cell wall glycoproteins such as extensins, hydroxyproline-rich glycoproteins, lectins and arabinogalactan proteins. Possesses high affinity for leucine-rich repeat and proline-rich extensins of root cell walls that are essential for root hair development. Hydroxyprolines define the subsequent O-glycosylation sites by arabinosyltransferases which elongate the O-arabinosides on extensins. The chain is Prolyl 4-hydroxylase 13 from Arabidopsis thaliana (Mouse-ear cress).